The primary structure comprises 472 residues: Siroheme synthase 2 (472 aa).

The interval 1–204 (MDYFPIFCQL…EDQVQVEQHV (204 aa)) is precorrin-2 dehydrogenase /sirohydrochlorin ferrochelatase. Residues 22–23 (EV) and 43–44 (CE) each bind NAD(+). The residue at position 128 (Ser128) is a Phosphoserine. Residues 216–472 (GEVVLVGAGP…GMKEQVERVG (257 aa)) form a uroporphyrinogen-III C-methyltransferase region. Residue Pro225 participates in S-adenosyl-L-methionine binding. The active-site Proton acceptor is the Asp248. Residue Lys270 is the Proton donor of the active site. Residues 301-303 (GGD), Ile306, 331-332 (TA), Met382, and Gly411 contribute to the S-adenosyl-L-methionine site.

The protein in the N-terminal section; belongs to the precorrin-2 dehydrogenase / sirohydrochlorin ferrochelatase family. It in the C-terminal section; belongs to the precorrin methyltransferase family.

It catalyses the reaction uroporphyrinogen III + 2 S-adenosyl-L-methionine = precorrin-2 + 2 S-adenosyl-L-homocysteine + H(+). The enzyme catalyses precorrin-2 + NAD(+) = sirohydrochlorin + NADH + 2 H(+). The catalysed reaction is siroheme + 2 H(+) = sirohydrochlorin + Fe(2+). It functions in the pathway cofactor biosynthesis; adenosylcobalamin biosynthesis; precorrin-2 from uroporphyrinogen III: step 1/1. Its pathway is cofactor biosynthesis; adenosylcobalamin biosynthesis; sirohydrochlorin from precorrin-2: step 1/1. It participates in porphyrin-containing compound metabolism; siroheme biosynthesis; precorrin-2 from uroporphyrinogen III: step 1/1. The protein operates within porphyrin-containing compound metabolism; siroheme biosynthesis; siroheme from sirohydrochlorin: step 1/1. It functions in the pathway porphyrin-containing compound metabolism; siroheme biosynthesis; sirohydrochlorin from precorrin-2: step 1/1. Multifunctional enzyme that catalyzes the SAM-dependent methylations of uroporphyrinogen III at position C-2 and C-7 to form precorrin-2 via precorrin-1. Then it catalyzes the NAD-dependent ring dehydrogenation of precorrin-2 to yield sirohydrochlorin. Finally, it catalyzes the ferrochelation of sirohydrochlorin to yield siroheme. In Yersinia enterocolitica serotype O:8 / biotype 1B (strain NCTC 13174 / 8081), this protein is Siroheme synthase 2.